The chain runs to 1690 residues: DNA-directed RNA polymerase subunit beta' (1690 aa).

Positions 63, 65, 78, and 81 each coordinate Zn(2+). Mg(2+) is bound by residues aspartate 753, aspartate 755, and aspartate 757. The Zn(2+) site is built by cysteine 1107, cysteine 1295, cysteine 1302, and cysteine 1305.

This sequence belongs to the RNA polymerase beta' chain family. The RNAP catalytic core consists of 2 alpha, 1 beta, 1 beta' and 1 omega subunit. When a sigma factor is associated with the core the holoenzyme is formed, which can initiate transcription. Mg(2+) serves as cofactor. Zn(2+) is required as a cofactor.

The enzyme catalyses RNA(n) + a ribonucleoside 5'-triphosphate = RNA(n+1) + diphosphate. Its function is as follows. DNA-dependent RNA polymerase catalyzes the transcription of DNA into RNA using the four ribonucleoside triphosphates as substrates. This Thermotoga neapolitana (strain ATCC 49049 / DSM 4359 / NBRC 107923 / NS-E) protein is DNA-directed RNA polymerase subunit beta'.